The sequence spans 433 residues: Indole diterpene prenyltransferase terF (433 aa).

The protein belongs to the tryptophan dimethylallyltransferase family.

Its pathway is secondary metabolite biosynthesis. Its function is as follows. Indole diterpene prenyltransferase; part of the gene cluster that mediates the biosynthesis of terpendoles, indole-diterpene (IDT) mycotoxins including terpendole I, terpendole K, terpendole C, as well as the kinesin Eg5 inhibitor terpendole E. Terpendoles biosynthesis begins with the synthesis of geranylgeranyl diphosphate (GGPP) by a yet unidentified GGPP synthase. Condensation of indole-3-glycerol phosphate with GGPP by the prenyltransferase terC then forms 3-geranylgeranylindole (3-GGI), followed by epoxidation and cyclization of this intermediate (by the FAD-dependent monooxygeanse terM and the terpene cyclase terB) to form paspaline. The cytochrome monooxygenase terQ then hydroxylates paspalline at C-11 to yield terpendole E. The cytochrome monooxygenase terP converts terpendole E to 13-desoxyterpendole I, and terQ converts 13-desoxyterpendole I into terpendole I. TerF and terK are required for conversion of terpendole I to terpendole C which is further converted to terpendole K. The chain is Indole diterpene prenyltransferase terF from Tolypocladium album (Soil fungus).